Here is a 437-residue protein sequence, read N- to C-terminus: Sorting nexin-30 (437 aa).

The segment at 1 to 45 is disordered; it reads MAGGPPKALPSTGPQSLRDMPHPLAGSSSEEAVGGDSTPSPDLLM. Thr-38 is subject to Phosphothreonine. Ser-40 bears the Phosphoserine mark. One can recognise a PX domain in the interval 89–210; it reads RDLFVTVDDP…VFLTAKDLNA (122 aa). Residues Arg-132, Gln-134, Lys-162, and Arg-176 each contribute to the a 1,2-diacyl-sn-glycero-3-phospho-(1D-myo-inositol-3-phosphate) site. One can recognise a BAR domain in the interval 234-437; sequence KLRSRPLEFA…PLLQEKQETK (204 aa).

Belongs to the sorting nexin family. Heterodimer; heterodimerizes with SNX4.

The protein localises to the early endosome membrane. Its function is as follows. Involved in the regulation of endocytosis and in several stages of intracellular trafficking. Together with SNX4, involved in autophagosome assembly. The chain is Sorting nexin-30 from Mus musculus (Mouse).